A 219-amino-acid chain; its full sequence is Lipid transferase CIDEB (219 aa).

The CIDE-N domain maps to 33-110 (PRQRPFRVCD…VLELGQSWSP (78 aa)).

Belongs to the CIDE family. As to quaternary structure, interacts with DFFA. Interacts with DFFB; inhibited by DFFB. Interacts with APOB. Interacts with PREB/SEC12; facilitating loading of SCAP-SREBP into COPII vesicles.

The protein resides in the lipid droplet. It localises to the endoplasmic reticulum membrane. Its subcellular location is the golgi apparatus. It is found in the cytoplasmic vesicle. The protein localises to the COPI-coated vesicle. Functionally, lipid transferase specifically expressed in hepatocytes, which promotes unilocular lipid droplet formation by mediating lipid droplet fusion. Lipid droplet fusion promotes their enlargement, restricting lipolysis and favoring lipid storage. Localizes on the lipid droplet surface, at focal contact sites between lipid droplets, and mediates atypical lipid droplet fusion by promoting directional net neutral lipid transfer from the smaller to larger lipid droplets. The transfer direction may be driven by the internal pressure difference between the contacting lipid droplet pair. Promotes lipid exchange and lipid droplet fusion in both small and large lipid droplet-containing hepatocytes. In addition to its role in lipid droplet fusion, also involved in cytoplasmic vesicle biogenesis and transport. Required for very-low-density lipoprotein (VLDL) lipidation and maturation. Probably involved in the biogenesis of VLDL transport vesicles by forming a COPII vesicle coat and facilitating the formation of endoplasmic reticulum-derived large vesicles. Also involved in sterol-regulated export of the SCAP-SREBP complex, composed of SCAP, SREBF1/SREBP1 and SREBF2/SREBP2, by promoting loading of SCAP-SREBP into COPII vesicles. May also activate apoptosis. This Bos taurus (Bovine) protein is Lipid transferase CIDEB (CIDEB).